The following is a 154-amino-acid chain: Large-conductance mechanosensitive channel (154 aa).

Helical transmembrane passes span 14–34 (VVDL…VNSL) and 86–106 (VFIN…FFVV).

It belongs to the MscL family. In terms of assembly, homopentamer.

Its subcellular location is the cell membrane. In terms of biological role, channel that opens in response to stretch forces in the membrane lipid bilayer. May participate in the regulation of osmotic pressure changes within the cell. The sequence is that of Large-conductance mechanosensitive channel from Dehalococcoides mccartyi (strain ATCC BAA-2100 / JCM 16839 / KCTC 5957 / BAV1).